Here is a 490-residue protein sequence, read N- to C-terminus: Phosphoglucosamine mutase (490 aa).

Residue S139 is the Phosphoserine intermediate of the active site. Positions 139, 279, 281, and 283 each coordinate Mg(2+). S139 carries the post-translational modification Phosphoserine.

The protein belongs to the phosphohexose mutase family. Mg(2+) is required as a cofactor. In terms of processing, activated by phosphorylation.

The enzyme catalyses alpha-D-glucosamine 1-phosphate = D-glucosamine 6-phosphate. Catalyzes the conversion of glucosamine-6-phosphate to glucosamine-1-phosphate. The protein is Phosphoglucosamine mutase of Trichormus variabilis (strain ATCC 29413 / PCC 7937) (Anabaena variabilis).